We begin with the raw amino-acid sequence, 612 residues long: MIKKSLLCTALSVTAFSGWAQDTRPDTLVVTANRFQQPRSAVLAPITVVTRQDIDRWQSTSVNDVLRRLPGVDIAQYGGMGQNSSISIRGTNASHVLVLIDGVRLNLAGVSGAADLSQFPVSLVQRIEYIRGPRSAVYGSDAIGGVVNIITTREKPGTELTAGVGSNGYQNYDVSTQQQLGENTRVTLMGDYAYTKGFDVVAYGSTGSQAQPDKDGFLSKTLYGALEHNFSDTWSGFVRGYGYDNRTNYDSYYSPGSPLLDTRKLYSQSWDAGLRFNGELIQSQLVSSYSHSKDYNYDPDYGRYDSSATLDEMKQYNVQWSNSIVVGHGNVGAGVDWQKQTTEPGTGYVTDGYDQRNTGLYLTGLQQLGDFTFEGAARSDDNSEFGRHGTWQTSAGWEFIEGYRFIASYGTSYKAPNLGQLHGYYGNSNLDPEQSKQWEGAFEGLTAGVNWRVSGYRNDIDDMIDYDPHTEKYFNEGKVRIKGVEATANFDTGPLAHTLSYDMVDSRNAITDKPLARRSKQQVKYQLDWQVYDFDWGLTYHYLGTRYDTDYVTYQPVKMGGVSLWDLAVSYPITSQLTVRGKIANRFDKDYETVYGYATAGREYTLSGSYTF.

The first 20 residues, 1-20 (MIKKSLLCTALSVTAFSGWA), serve as a signal peptide directing secretion. Positions 26–33 (DTLVVTAN) match the TonB box motif. In terms of domain architecture, TBDR plug spans 38 to 152 (PRSAVLAPIT…IGGVVNIITT (115 aa)). Residues serine 85, asparagine 92, and 110-111 (VS) each bind cyanocob(III)alamin. A TBDR beta-barrel domain is found at 155–612 (KPGTELTAGV…EYTLSGSYTF (458 aa)). 3 beta stranded membrane passes run 158 to 165 (TELTAGVG), 169 to 178 (YQNYDVSTQQ), and 184 to 195 (TRVTLMGDYAYT). Aspartate 199, glutamine 211, aspartate 213, and aspartate 215 together coordinate Ca(2+). The next 2 beta stranded transmembrane spans lie at 217 to 227 (FLSKTLYGALE) and 232 to 248 (DTWS…NRTN). Ca(2+) is bound by residues tyrosine 249, aspartate 250, and aspartate 261. 14 consecutive transmembrane segments (beta stranded) span residues 263-277 (RKLY…LRFN), 279-296 (ELIQ…KDYN), 309-325 (TLDE…NSIV), 328-337 (HGNVGAGVDW), 353-369 (YDQR…QQLG), 371-381 (FTFEGAARSDD), 385-400 (FGRH…WEFI), 403-417 (YRFI…KAPN), 434-443 (QSKQWEGAFE), 449-458 (VNWRVSGYRN), 473-490 (YFNE…TANF), 494-509 (PLAH…SRNA), 517-529 (RRSK…QLDW), and 535-550 (DWGL…YDTD). Residue threonine 309 coordinates cyanocob(III)alamin. Arginine 517 lines the cyanocob(III)alamin pocket. Tyrosine 551 contacts cyanocob(III)alamin. 3 consecutive transmembrane segments (beta stranded) span residues 556-570 (PVKM…LAVS), 583-594 (IANRFDKDYETV), and 600-612 (AGRE…SYTF). Residues 595–612 (YGYATAGREYTLSGSYTF) carry the TonB C-terminal box motif.

This sequence belongs to the TonB-dependent receptor family. BtuB (TC 1.B.14.3.1) subfamily.

It is found in the cell outer membrane. Its function is as follows. Involved in the active translocation of vitamin B12 (cyanocobalamin) across the outer membrane to the periplasmic space. It derives its energy for transport by interacting with the trans-periplasmic membrane protein TonB. This chain is Vitamin B12 transporter BtuB, found in Citrobacter freundii.